A 197-amino-acid polypeptide reads, in one-letter code: Putative mediator of RNA polymerase II transcription subunit 9 (197 aa).

Positions 83-117 (GINRSLENQEELLKTYKQTLKKKVELLEKLKKLEI) form a coiled coil. Polar residues predominate over residues 126–144 (STSSQSPQIQSKLELQTEL). The interval 126-197 (STSSQSPQIQ…KETTEDIMKE (72 aa)) is disordered. The span at 145–182 (SQTEPSQTEPSQTEPSQTEPSQTESSQIESSQIESSQT) shows a compositional bias: low complexity. The span at 183–197 (ETEKSKETTEDIMKE) shows a compositional bias: basic and acidic residues.

The protein belongs to the Mediator complex subunit 9 family. As to quaternary structure, component of the Mediator complex.

It localises to the nucleus. Its function is as follows. Component of the Mediator complex, a coactivator involved in the regulated transcription of nearly all RNA polymerase II-dependent genes. Mediator functions as a bridge to convey information from gene-specific regulatory proteins to the basal RNA polymerase II transcription machinery. Mediator is recruited to promoters by direct interactions with regulatory proteins and serves as a scaffold for the assembly of a functional preinitiation complex with RNA polymerase II and the general transcription factors. The polypeptide is Putative mediator of RNA polymerase II transcription subunit 9 (med9) (Dictyostelium discoideum (Social amoeba)).